The chain runs to 573 residues: Glucocorticoid modulatory element-binding protein 1 (573 aa).

Ala2 carries the N-acetylalanine modification. Residues 82–166 (TGTIEANEDM…RKMMDSGQID (85 aa)) enclose the SAND domain. Zn(2+) is bound at residue Cys113. Residues Lys139, Lys143, Lys146, and Arg157 each coordinate DNA. Zn(2+) contacts are provided by His170, Cys174, and Cys178. Positions 321–367 (LDNRRNQVEQGEEQFLYTLTDLERQLEEQKKQGQDHRLKSQTVQNVV) form a coiled coil. The disordered stretch occupies residues 370–398 (PVSTPKPPKRPRLQRPASTTVLSPSPPVQ).

As to quaternary structure, homodimer, and heterodimer of GMEB1 and GMEB2. GMEB1 and GMEB2 form the parvovirus initiator complex (PIF). Interacts with the glucocorticoid receptor (NR3C1) and NCOA2/TIF2. May interact with HSP27 and CREB-binding protein (CBP).

The protein resides in the nucleus. It is found in the cytoplasm. In terms of biological role, trans-acting factor that binds to glucocorticoid modulatory elements (GME) present in the TAT (tyrosine aminotransferase) promoter and increases sensitivity to low concentrations of glucocorticoids. Also binds to the transferrin receptor promoter. Essential auxiliary factor for the replication of parvoviruses. The polypeptide is Glucocorticoid modulatory element-binding protein 1 (GMEB1) (Homo sapiens (Human)).